We begin with the raw amino-acid sequence, 660 residues long: UvrABC system protein B (660 aa).

Residues 24–177 enclose the Helicase ATP-binding domain; the sequence is KGFKEGNQFE…DDLARALIDL (154 aa). An ATP-binding site is contributed by 37 to 44; it reads GVTGSGKT. The short motif at 90–113 is the Beta-hairpin element; that stretch reads YYDYYQPEAYVPQSDTYIAKDSSV. The region spanning 428–594 is the Helicase C-terminal domain; the sequence is QIDDLVSEVN…TIQKSVRDLI (167 aa). In terms of domain architecture, UVR spans 620–655; that stretch reads EKHIADIEKKMKKAAAELNFEAAAEYRDKLIMLKNT.

The protein belongs to the UvrB family. Forms a heterotetramer with UvrA during the search for lesions. Interacts with UvrC in an incision complex.

It is found in the cytoplasm. The UvrABC repair system catalyzes the recognition and processing of DNA lesions. A damage recognition complex composed of 2 UvrA and 2 UvrB subunits scans DNA for abnormalities. Upon binding of the UvrA(2)B(2) complex to a putative damaged site, the DNA wraps around one UvrB monomer. DNA wrap is dependent on ATP binding by UvrB and probably causes local melting of the DNA helix, facilitating insertion of UvrB beta-hairpin between the DNA strands. Then UvrB probes one DNA strand for the presence of a lesion. If a lesion is found the UvrA subunits dissociate and the UvrB-DNA preincision complex is formed. This complex is subsequently bound by UvrC and the second UvrB is released. If no lesion is found, the DNA wraps around the other UvrB subunit that will check the other stand for damage. The protein is UvrABC system protein B of Agathobacter rectalis (strain ATCC 33656 / DSM 3377 / JCM 17463 / KCTC 5835 / VPI 0990) (Eubacterium rectale).